The chain runs to 69 residues: DNA-directed RNA polymerase subunit omega (69 aa).

Belongs to the RNA polymerase subunit omega family. The RNAP catalytic core consists of 2 alpha, 1 beta, 1 beta' and 1 omega subunit. When a sigma factor is associated with the core the holoenzyme is formed, which can initiate transcription.

The catalysed reaction is RNA(n) + a ribonucleoside 5'-triphosphate = RNA(n+1) + diphosphate. Functionally, promotes RNA polymerase assembly. Latches the N- and C-terminal regions of the beta' subunit thereby facilitating its interaction with the beta and alpha subunits. The sequence is that of DNA-directed RNA polymerase subunit omega from Carboxydothermus hydrogenoformans (strain ATCC BAA-161 / DSM 6008 / Z-2901).